Consider the following 887-residue polypeptide: MLSRLFRMHGLFVASHPWEVIVGTVTLTICMMSMNMFTGNNKICGWNYECPKFEEDVLSSDIIILTITRCIAILYIYFQFQNLRQLGSKYILGIAGLFTIFSSFVFSTVVIHFLDKELTGLNEALPFFLLLIDLSRASALAKFALSSNSQDEVRENIARGMAILGPTFTLDALVECLVIGVGTMSGVRQLEIMCCFGCMSVLANYFVFMTFFPACVSLVLELSRESREGRPIWQLSHFARVLEEEENKPNPVTQRVKMIMSLGLVLVHAHSRWIADPSPQNSTTEHSKVSLGLDEDVSKRIEPSVSLWQFYLSKMISMDIEQVVTLSLAFLLAVKYIFFEQAETESTLSLKNPITSPVATPKKAPDNCCRREPVLSRRNEKLSSVEEEPGVNQDRKVEVIKPLVAETESTSRATFVLGASGGCSPVALGTQEPEIELPSEPRPNEECLQILESAEKGAKFLSDAEIIQLVNAKHIPAYKLETLMETHERGVSIRRQLLSTKLPEPSSLQYLPYRDYNYSLVMGACCENVIGYMPIPVGVAGPLCLDGKEYQVPMATTEGCLVASTNRGCRAIGLGGGASSRVLADGMTRGPVVRLPRACDSAEVKAWLETPEGFAVIKDAFDSTSRFARLQKLHVTMAGRNLYIRFQSKTGDAMGMNMISKGTEKALVKLQEFFPEMQILAVSGNYCTDKKPAAVNWIEGRGKTVVCEAVIPARVVREVLKTTTEAMIDVNINKNLVGSAMAGSIGGYNAHAANIVTAIYIACGQDAAQNVGSSNCITLMEASGPTNEDLYISCTMPSIEIGTVGGGTNLLPQQACLQMLGVQGACKDNPGENARQLARIVCGTVMAGELSLMAALAAGHLVRSHMVHNRSKINLQDLQGTCTKKAA.

Residues Met1–His9 are Cytoplasmic-facing. Residues Gly10–Gly39 form a helical membrane-spanning segment. Over Asn40–Asp56 the chain is Lumenal. Residues Val57 to Phe78 form a helical membrane-spanning segment. An SSD domain is found at Asp61–Leu218. The short motif at Tyr75 to Phe78 is the INSIG-binding motif element. At Gln79–Lys89 the chain is on the cytoplasmic side. A Glycyl lysine isopeptide (Lys-Gly) (interchain with G-Cter in ubiquitin) cross-link involves residue Lys89. A helical transmembrane segment spans residues Tyr90–Leu114. The Lumenal portion of the chain corresponds to Asp115–Glu123. A helical transmembrane segment spans residues Ala124–Ser149. The Cytoplasmic portion of the chain corresponds to Gln150 to Arg159. The helical transmembrane segment at Gly160–Val187 threads the bilayer. At Arg188–Glu191 the chain is on the lumenal side. A helical membrane pass occupies residues Ile192 to Leu220. Topologically, residues Glu221–Lys248 are cytoplasmic. Residue Lys248 forms a Glycyl lysine isopeptide (Lys-Gly) (interchain with G-Cter in ubiquitin) linkage. The helical transmembrane segment at Pro249 to Ala275 threads the bilayer. The Lumenal portion of the chain corresponds to Asp276–Lys314. An N-linked (GlcNAc...) asparagine glycan is attached at Asn281. Residues Met315–Phe339 form a helical membrane-spanning segment. Over Glu340–Ala887 the chain is Cytoplasmic. Residues Glu558, Lys690, and Asp766 each act as charge relay system in the active site. His865 serves as the catalytic Proton donor. Ser871 is modified (phosphoserine; by AMPK).

It belongs to the HMG-CoA reductase family. In terms of assembly, homotetramer. Homodimer. Interacts (via its SSD) with INSIG1; the interaction, accelerated by sterols, leads to the recruitment of HMGCR to AMFR/gp78 for its ubiquitination by the sterol-mediated ERAD pathway. Interacts with UBIAD1. Post-translationally, undergoes sterol-mediated ubiquitination and ER-associated degradation (ERAD). Accumulation of sterols in the endoplasmic reticulum (ER) membrane, triggers binding of the reductase to the ER membrane protein INSIG1 or INSIG2. The INSIG1 binding leads to the recruitment of the ubiquitin ligase, AMFR/gp78, RNF139 or RNF145, initiating ubiquitination of the reductase. The ubiquitinated reductase is then extracted from the ER membrane and delivered to cytosolic 26S proteosomes by a mechanism probably mediated by the ATPase Valosin-containing protein VCP/p97. The INSIG2-binding leads to the recruitment of the ubiquitin ligase RNF139, initiating ubiquitination of the reductase. Lys-248 is the main site of ubiquitination. Ubiquitination is enhanced by the presence of a geranylgeranylated protein. In terms of processing, N-glycosylated. Deglycosylated by NGLY1 on release from the endoplasmic reticulum (ER) in a sterol-mediated manner. Phosphorylated. Phosphorylation at Ser-871 reduces the catalytic activity.

It localises to the endoplasmic reticulum membrane. The protein localises to the peroxisome membrane. It carries out the reaction (R)-mevalonate + 2 NADP(+) + CoA = (3S)-3-hydroxy-3-methylglutaryl-CoA + 2 NADPH + 2 H(+). It functions in the pathway metabolic intermediate biosynthesis; (R)-mevalonate biosynthesis; (R)-mevalonate from acetyl-CoA: step 3/3. Its activity is regulated as follows. Regulated by a negative feedback mechanism through sterols and non-sterol metabolites derived from mevalonate. Phosphorylation at Ser-871 down-regulates the catalytic activity. Catalyzes the conversion of (3S)-hydroxy-3-methylglutaryl-CoA (HMG-CoA) to mevalonic acid, the rate-limiting step in the synthesis of cholesterol and other isoprenoids, thus plays a critical role in cellular cholesterol homeostasis. This Mesocricetus auratus (Golden hamster) protein is 3-hydroxy-3-methylglutaryl-coenzyme A reductase (HMGCR).